The primary structure comprises 217 residues: UPF0323 lipoprotein HPSH_01205 (217 aa).

Residues 1–27 (MKKPYRKISDYAIVGGLSALVMVSIVG) form the signal peptide. The N-palmitoyl cysteine moiety is linked to residue C28. A lipid anchor (S-diacylglycerol cysteine) is attached at C28. The segment covering 160–171 (QRTYKSPQAYQR) has biased composition (polar residues). The segment at 160–217 (QRTYKSPQAYQRSQNSFSKSAPSASSMGGASKGQSGFFGSSRPTSSPAVSSGTRGFNS) is disordered. Positions 172–210 (SQNSFSKSAPSASSMGGASKGQSGFFGSSRPTSSPAVSS) are enriched in low complexity.

This sequence belongs to the UPF0323 family.

Its subcellular location is the cell membrane. The protein is UPF0323 lipoprotein HPSH_01205 of Helicobacter pylori (strain Shi470).